A 546-amino-acid chain; its full sequence is Probable zinc metalloprotease EGY2, chloroplastic (546 aa).

Residues 1–64 constitute a chloroplast transit peptide; that stretch reads MQLPAMSCSP…QIRNRRFVCQ (64 aa). The interval 67-143 is disordered; that stretch reads TETEPDGDGN…DATPASDAQE (77 aa). The span at 69-86 shows a compositional bias: acidic residues; it reads TEPDGDGNGDEEKEELGD. Polar residues-rich tracts occupy residues 89-110 and 118-130; these read SSPS…TNAD and NTEP…TVQN. 7 consecutive transmembrane segments (helical) span residues 257–277, 301–321, 326–346, 364–384, 427–447, 474–494, and 514–534; these read AVPE…TLLL, VYGA…HILA, GIKL…FGAI, AAGP…GFIL, PLVL…IPAG, LLGI…LIFF, and YISI…PYPF.

It belongs to the peptidase M50B family.

It localises to the plastid. Its subcellular location is the chloroplast membrane. Probable membrane-associated metalloprotease that may be involved in chloroplast development. This Oryza sativa subsp. japonica (Rice) protein is Probable zinc metalloprotease EGY2, chloroplastic (EGY2).